Consider the following 305-residue polypeptide: Ribonuclease BN (305 aa).

Residues histidine 64, histidine 66, aspartate 68, histidine 69, histidine 141, aspartate 212, and histidine 270 each contribute to the Zn(2+) site. Aspartate 68 acts as the Proton acceptor in catalysis.

This sequence belongs to the RNase Z family. RNase BN subfamily. In terms of assembly, homodimer. The cofactor is Zn(2+).

Its function is as follows. Zinc phosphodiesterase, which has both exoribonuclease and endoribonuclease activities. The chain is Ribonuclease BN from Escherichia coli O127:H6 (strain E2348/69 / EPEC).